Consider the following 552-residue polypeptide: 5'-AMP-activated protein kinase catalytic subunit alpha-2 (552 aa).

The Protein kinase domain occupies tyrosine 16 to phenylalanine 268. Residues leucine 22 to valine 30 and lysine 45 contribute to the ATP site. Aspartate 139 functions as the Proton acceptor in the catalytic mechanism. A Phosphothreonine; by LKB1 and CaMKK2 modification is found at threonine 172. A Phosphothreonine modification is found at threonine 258. The interval glutamate 291–aspartate 376 is AIS. Serine 377 and serine 491 each carry phosphoserine.

This sequence belongs to the protein kinase superfamily. CAMK Ser/Thr protein kinase family. SNF1 subfamily. In terms of assembly, AMPK is a heterotrimer of an alpha catalytic subunit (PRKAA1 or PRKAA2), a beta (PRKAB1 or PRKAB2) and a gamma non-catalytic subunits (PRKAG1, PRKAG2 or PRKAG3). Interacts with FNIP1 and FNIP2. Interacts with DUSP29. Interacts with ARF6. The phosphorylated form at Thr-172 mediated by CamKK2 interacts with ACSS2. Mg(2+) is required as a cofactor. Ubiquitinated. Post-translationally, phosphorylated at Thr-172 by STK11/LKB1 in complex with STE20-related adapter-alpha (STRADA) pseudo kinase and CAB39. Also phosphorylated at Thr-172 by CAMKK2; triggered by a rise in intracellular calcium ions, without detectable changes in the AMP/ATP ratio. CAMKK1 can also phosphorylate Thr-172, but at much lower level. Dephosphorylated by protein phosphatase 2A and 2C (PP2A and PP2C). Phosphorylated by ULK1; leading to negatively regulate AMPK activity and suggesting the existence of a regulatory feedback loop between ULK1 and AMPK. Dephosphorylated by PPM1A and PPM1B at Thr-172 (mediated by STK11/LKB1).

The protein resides in the cytoplasm. The protein localises to the nucleus. The enzyme catalyses L-seryl-[protein] + ATP = O-phospho-L-seryl-[protein] + ADP + H(+). The catalysed reaction is L-threonyl-[protein] + ATP = O-phospho-L-threonyl-[protein] + ADP + H(+). It carries out the reaction L-seryl-[acetyl-CoA carboxylase] + ATP = O-phospho-L-seryl-[acetyl-CoA carboxylase] + ADP + H(+). It catalyses the reaction L-seryl-[3-hydroxy-3-methylglutaryl-coenzyme A reductase] + ATP = O-phospho-L-seryl-[3-hydroxy-3-methylglutaryl-coenzyme A reductase] + ADP + H(+). Its activity is regulated as follows. Activated by phosphorylation on Thr-172. Binding of AMP to non-catalytic gamma subunit (PRKAG1, PRKAG2 or PRKAG3) results in allosteric activation, inducing phosphorylation on Thr-172. AMP-binding to gamma subunit also sustains activity by preventing dephosphorylation of Thr-172. ADP also stimulates Thr-172 phosphorylation, without stimulating already phosphorylated AMPK. ATP promotes dephosphorylation of Thr-172, rendering the enzyme inactive. Under physiological conditions AMPK mainly exists in its inactive form in complex with ATP, which is much more abundant than AMP. Selectively inhibited by compound C (6-[4-(2-Piperidin-1-yl-ethoxy)-phenyl)]-3-pyridin-4-yl-pyyrazolo[1,5-a] pyrimidine. Activated by resveratrol, a natural polyphenol present in red wine, and S17834, a synthetic polyphenol. Salicylate/aspirin directly activates kinase activity, primarily by inhibiting Thr-172 dephosphorylation. Its function is as follows. Catalytic subunit of AMP-activated protein kinase (AMPK), an energy sensor protein kinase that plays a key role in regulating cellular energy metabolism. In response to reduction of intracellular ATP levels, AMPK activates energy-producing pathways and inhibits energy-consuming processes: inhibits protein, carbohydrate and lipid biosynthesis, as well as cell growth and proliferation. AMPK acts via direct phosphorylation of metabolic enzymes, and by longer-term effects via phosphorylation of transcription regulators. Regulates lipid synthesis by phosphorylating and inactivating lipid metabolic enzymes such as ACACA, ACACB, GYS1, HMGCR and LIPE; regulates fatty acid and cholesterol synthesis by phosphorylating acetyl-CoA carboxylase (ACACA and ACACB) and hormone-sensitive lipase (LIPE) enzymes, respectively. Promotes lipolysis of lipid droplets by mediating phosphorylation of isoform 1 of CHKA (CHKalpha2). Regulates insulin-signaling and glycolysis by phosphorylating IRS1, PFKFB2 and PFKFB3. Involved in insulin receptor/INSR internalization. AMPK stimulates glucose uptake in muscle by increasing the translocation of the glucose transporter SLC2A4/GLUT4 to the plasma membrane, possibly by mediating phosphorylation of TBC1D4/AS160. Regulates transcription and chromatin structure by phosphorylating transcription regulators involved in energy metabolism such as CRTC2/TORC2, FOXO3, histone H2B, HDAC5, MEF2C, MLXIPL/ChREBP, EP300, HNF4A, p53/TP53, SREBF1, SREBF2 and PPARGC1A. Acts as a key regulator of glucose homeostasis in liver by phosphorylating CRTC2/TORC2, leading to CRTC2/TORC2 sequestration in the cytoplasm. In response to stress, phosphorylates 'Ser-36' of histone H2B (H2BS36ph), leading to promote transcription. Acts as a key regulator of cell growth and proliferation by phosphorylating FNIP1, TSC2, RPTOR, WDR24 and ATG1/ULK1: in response to nutrient limitation, negatively regulates the mTORC1 complex by phosphorylating RPTOR component of the mTORC1 complex and by phosphorylating and activating TSC2. Also phosphorylates and inhibits GATOR2 subunit WDR24 in response to nutrient limitation, leading to suppress glucose-mediated mTORC1 activation. In response to energetic stress, phosphorylates FNIP1, inactivating the non-canonical mTORC1 signaling, thereby promoting nuclear translocation of TFEB and TFE3, and inducing transcription of lysosomal or autophagy genes. In response to nutrient limitation, promotes autophagy by phosphorylating and activating ATG1/ULK1. In that process, it also activates WDR45/WIPI4. Phosphorylates CASP6, thereby preventing its autoprocessing and subsequent activation. AMPK also acts as a regulator of circadian rhythm by mediating phosphorylation of CRY1, leading to destabilize it. May regulate the Wnt signaling pathway by phosphorylating CTNNB1, leading to stabilize it. Also acts as a regulator of cellular polarity by remodeling the actin cytoskeleton; probably by indirectly activating myosin. Also phosphorylates CFTR, EEF2K, KLC1, NOS3 and SLC12A1. Plays an important role in the differential regulation of pro-autophagy (composed of PIK3C3, BECN1, PIK3R4 and UVRAG or ATG14) and non-autophagy (composed of PIK3C3, BECN1 and PIK3R4) complexes, in response to glucose starvation. Can inhibit the non-autophagy complex by phosphorylating PIK3C3 and can activate the pro-autophagy complex by phosphorylating BECN1. Upon glucose starvation, promotes ARF6 activation in a kinase-independent manner leading to cell migration. Upon glucose deprivation mediates the phosphorylation of ACSS2 at 'Ser-659', which exposes the nuclear localization signal of ACSS2, required for its interaction with KPNA1 and nuclear translocation. Upon stress, regulates mitochondrial fragmentation through phosphorylation of MTFR1L. The chain is 5'-AMP-activated protein kinase catalytic subunit alpha-2 from Mus musculus (Mouse).